A 523-amino-acid chain; its full sequence is NAD(P) transhydrogenase subunit alpha (523 aa).

Residues 1 to 411 (MKIGAPREIF…AEIATFRKQT (411 aa)) lie on the Cytoplasmic side of the membrane. NAD(+)-binding positions include 127–130 (QKMD), V177, 197–199 (DVR), and G229. The next 2 membrane-spanning stretches (helical) occupy residues 412–432 (VSQV…GMYA) and 433–455 (PPSF…QVIW). The Cytoplasmic segment spans residues 456–464 (NVSHSLHTP). A helical membrane pass occupies residues 465–485 (LMAVTNAISGIVILGALLQIG). At 486–489 (SGNV) the chain is on the periplasmic side. A helical membrane pass occupies residues 490–510 (LVVLLAAISVLIATINIVGGF). Topologically, residues 511-523 (LVTRRMLAMFQKS) are cytoplasmic.

This sequence belongs to the AlaDH/PNT family. As to quaternary structure, heterodimer of an alpha (PntA) and a beta (PntB) chain.

It is found in the cell inner membrane. The enzyme catalyses NAD(+) + NADPH + H(+)(in) = NADH + NADP(+) + H(+)(out). Functionally, the transhydrogenation between NADH and NADP is coupled to respiration and ATP hydrolysis and functions as a proton pump across the membrane. In Cereibacter sphaeroides (Rhodobacter sphaeroides), this protein is NAD(P) transhydrogenase subunit alpha.